A 509-amino-acid polypeptide reads, in one-letter code: Kynureninase 1 (509 aa).

Pyridoxal 5'-phosphate contacts are provided by residues leucine 154, threonine 155, 183–186 (FPSD), aspartate 270, histidine 273, and tyrosine 295. N6-(pyridoxal phosphate)lysine is present on lysine 296. Positions 345 and 373 each coordinate pyridoxal 5'-phosphate.

The protein belongs to the kynureninase family. As to quaternary structure, homodimer. Pyridoxal 5'-phosphate serves as cofactor.

The protein localises to the cytoplasm. The catalysed reaction is L-kynurenine + H2O = anthranilate + L-alanine + H(+). It catalyses the reaction 3-hydroxy-L-kynurenine + H2O = 3-hydroxyanthranilate + L-alanine + H(+). It functions in the pathway amino-acid degradation; L-kynurenine degradation; L-alanine and anthranilate from L-kynurenine: step 1/1. It participates in cofactor biosynthesis; NAD(+) biosynthesis; quinolinate from L-kynurenine: step 2/3. Functionally, catalyzes the cleavage of L-kynurenine (L-Kyn) and L-3-hydroxykynurenine (L-3OHKyn) into anthranilic acid (AA) and 3-hydroxyanthranilic acid (3-OHAA), respectively. The polypeptide is Kynureninase 1 (Chaetomium globosum (strain ATCC 6205 / CBS 148.51 / DSM 1962 / NBRC 6347 / NRRL 1970) (Soil fungus)).